A 299-amino-acid chain; its full sequence is Non-structural protein V (299 aa).

Residues 40–98 form a disordered region; it reads SDNPGQEQATCKEEEAGASGLSKPCLSAIGSTEGGAPRIRGQGSGESDDDTETLGFPSR. The interaction with host STAT1 stretch occupies residues 110–120; the sequence is YYVYDHSGEAV. The span at 134-145 shows a compositional bias: low complexity; the sequence is GLDGDSTLSGGD. 2 disordered regions span residues 134 to 174 and 204 to 230; these read GLDG…APIS and PKLGKTLNVPPPPDPGRASTSETPIKK. Acidic residues predominate over residues 146 to 160; sequence NESENSDVDIGEPDT. Zn(2+) contacts are provided by His-232, Cys-251, Cys-255, Cys-267, Cys-269, Cys-272, Cys-276, and Cys-279.

Belongs to the paramyxoviruses V protein family. In terms of assembly, interacts with host IFIH1/MDA5 and DHX58/LGP2; these interactions are involved in the inhibition of the host type I interferon signaling pathway. Interacts with host TYK2; this interaction inhibits the type I interferon signaling pathway without affecting the type II pathway. Interacts with host IRF7; this interaction inhibits IRF7 translocation to the nucleus. Interacts with host CHUK. Interacts with host RELA/p65; this interaction inhibits the nuclear translocation of NF-KappaB. Interacts (via N-terminus) with host STAT1 and JAK1; these interactions inhibit STAT1 phosphorylation by Jak1 and thereby the type I interferon signaling pathway. Interacts (via C-terminus) with host STAT2; this interaction is involved in the inhibition of the host type I interferon signaling pathway. Forms a complex with host PPP1CA and PPP1CC; this interaction prevents dephosphorylation of host IFIH1/MDA5 and leads to the inhibition of the host type I interferon signaling pathway. Interacts with host IRF9; this interaction prevents the binding of IRF9 to STAT2 and thereby the type I interferon signaling pathway. Interacts with host RIGI regulatory protein (via CARDs domain) and host TRIM25 (via SPRY domain); these interactions prevent TRIM25-mediated ubiquitination of RIG-I and disrupts downstream RIG-I signaling.

It localises to the host cytoplasm. Its function is as follows. Plays an essential role in the inhibition of host immune response. Prevents the establishment of cellular antiviral state by blocking interferon-alpha/beta (IFN-alpha/beta) production and signaling pathway. Interacts with host IFIH1/MDA5 and DHX58/LGP2 to inhibit the transduction pathway involved in the activation of IFN-beta promoter, thus protecting the virus against cell antiviral state. Blocks the type I interferon signaling pathway by interacting with host TYK2 and thereby inhibiting downstream STAT1 and STAT2 phosphorylation. Blocks the type I interferon signaling pathway by disrupting the RIG-I signaling pathway. Moderately affects the type II interferon signaling. Prevents PP1alpha/gamma-mediated dephosphorylation of host IFIH1/MDA5 and thus blocks its activation. In Measles virus (strain IP-3-Ca) (MeV), this protein is Non-structural protein V (P/V).